A 202-amino-acid polypeptide reads, in one-letter code: MYDYEELLNRAMSKMPDTETTDARFVIPEPKLFSEGKTTILDNFGNIADTLNRDPDHLMKYLTRELGTAGKIEGTRAVFQGRFTRAQLSDNIQAYVDEYVMCSECGRPDTQLVRVDRVLVLKCSACGAHRPVKKRKVSNVVVREAIEEGGTYELRIDAVGSKGDGIAKIDKYTVFVPGATKGDVVKVKIKKISGNLAFSERA.

A TRAM domain is found at 145–202 (AIEEGGTYELRIDAVGSKGDGIAKIDKYTVFVPGATKGDVVKVKIKKISGNLAFSERA).

The protein belongs to the eIF-2-beta/eIF-5 family. As to quaternary structure, heterotrimer composed of an alpha, a beta and a gamma chain.

Its function is as follows. eIF-2 functions in the early steps of protein synthesis by forming a ternary complex with GTP and initiator tRNA. This is Translation initiation factor 2 subunit beta (eif2b) from Methanosarcina mazei (strain ATCC BAA-159 / DSM 3647 / Goe1 / Go1 / JCM 11833 / OCM 88) (Methanosarcina frisia).